Consider the following 122-residue polypeptide: Large ribosomal subunit protein uL14 (122 aa).

It belongs to the universal ribosomal protein uL14 family. As to quaternary structure, part of the 50S ribosomal subunit. Forms a cluster with proteins L3 and L19. In the 70S ribosome, L14 and L19 interact and together make contacts with the 16S rRNA in bridges B5 and B8.

In terms of biological role, binds to 23S rRNA. Forms part of two intersubunit bridges in the 70S ribosome. The sequence is that of Large ribosomal subunit protein uL14 from Limosilactobacillus fermentum (strain NBRC 3956 / LMG 18251) (Lactobacillus fermentum).